A 261-amino-acid chain; its full sequence is Immediate-early protein IE-0 (261 aa).

The segment at 212-257 (CNVCKEISTDERFLKPKECCEYAICNACCVNMWKTATTHAKCPACR) adopts an RING-type zinc-finger fold.

In terms of assembly, interacts with proteins C42 and FP25. Interacts with host beta-tubulin. Interacts with Ac66 and vUb.

It is found in the host nucleus. The protein localises to the host cytoplasm. It localises to the virion. Putative viral E3 ligase that plays an essential regulatory role in both viral DNA replication and transcriptional transactivation. The role in transcription has been shown to include activation of gene expression from early viral promoters. Also promotes the efficient egress of nucleocapsids from the host nucleus. May act as an E3 ligase that promotes ubiquitination of nucleocapsids proteins by vUbi and subsequent viral egress for the host nucleus. This Lepidoptera (butterflies and moths) protein is Immediate-early protein IE-0 (IE0).